The following is a 162-amino-acid chain: Ribosome maturation factor RimP (162 aa).

Belongs to the RimP family.

The protein localises to the cytoplasm. Required for maturation of 30S ribosomal subunits. The polypeptide is Ribosome maturation factor RimP (Leptospira biflexa serovar Patoc (strain Patoc 1 / Ames)).